We begin with the raw amino-acid sequence, 160 residues long: Cytochrome b6-f complex subunit 4 (160 aa).

Transmembrane regions (helical) follow at residues 36-56 (IFYMFPVVIFGTFAGVIGLAV), 96-116 (LGVLLMAAVPAGLITVPFIKI), and 131-151 (TVFLVGTVAAIWLGIGAALPI).

Belongs to the cytochrome b family. PetD subfamily. In terms of assembly, the 4 large subunits of the cytochrome b6-f complex are cytochrome b6, subunit IV (17 kDa polypeptide, petD), cytochrome f and the Rieske protein, while the 4 small subunits are petG, petL, petM and petN. The complex functions as a dimer.

It localises to the plastid. The protein resides in the chloroplast thylakoid membrane. Component of the cytochrome b6-f complex, which mediates electron transfer between photosystem II (PSII) and photosystem I (PSI), cyclic electron flow around PSI, and state transitions. This chain is Cytochrome b6-f complex subunit 4, found in Auxenochlorella protothecoides (Green microalga).